Here is a 294-residue protein sequence, read N- to C-terminus: Pyridoxal 5'-phosphate synthase subunit PdxS (294 aa).

Position 24 (aspartate 24) interacts with D-ribose 5-phosphate. Lysine 81 functions as the Schiff-base intermediate with D-ribose 5-phosphate in the catalytic mechanism. Glycine 153 is a binding site for D-ribose 5-phosphate. A D-glyceraldehyde 3-phosphate-binding site is contributed by arginine 165. D-ribose 5-phosphate is bound by residues glycine 214 and 235-236 (GS).

It belongs to the PdxS/SNZ family. As to quaternary structure, in the presence of PdxT, forms a dodecamer of heterodimers.

The catalysed reaction is aldehydo-D-ribose 5-phosphate + D-glyceraldehyde 3-phosphate + L-glutamine = pyridoxal 5'-phosphate + L-glutamate + phosphate + 3 H2O + H(+). It participates in cofactor biosynthesis; pyridoxal 5'-phosphate biosynthesis. Its function is as follows. Catalyzes the formation of pyridoxal 5'-phosphate from ribose 5-phosphate (RBP), glyceraldehyde 3-phosphate (G3P) and ammonia. The ammonia is provided by the PdxT subunit. Can also use ribulose 5-phosphate and dihydroxyacetone phosphate as substrates, resulting from enzyme-catalyzed isomerization of RBP and G3P, respectively. The sequence is that of Pyridoxal 5'-phosphate synthase subunit PdxS from Geobacillus thermodenitrificans (strain NG80-2).